We begin with the raw amino-acid sequence, 1899 residues long: Protein TIC 214 (1899 aa).

The next 6 membrane-spanning stretches (helical) occupy residues valine 23–phenylalanine 43, phenylalanine 64–leucine 84, proline 87–histidine 107, leucine 124–leucine 144, valine 172–isoleucine 192, and tryptophan 217–histidine 237. 2 disordered regions span residues glutamate 256–glutamate 280 and proline 1581–leucine 1619. Basic and acidic residues predominate over residues glutamate 269–glutamate 280.

Belongs to the TIC214 family. In terms of assembly, part of the Tic complex.

The protein resides in the plastid. The protein localises to the chloroplast inner membrane. In terms of biological role, involved in protein precursor import into chloroplasts. May be part of an intermediate translocation complex acting as a protein-conducting channel at the inner envelope. This is Protein TIC 214 from Ceratophyllum demersum (Rigid hornwort).